Reading from the N-terminus, the 61-residue chain is MPEKTKLGNSLSFNYFLLLVGVLTFLGYYFLGDSNIMISWLLAMCPITVGIANIGRIKNEK.

This is an uncharacterized protein from Staphylococcus epidermidis.